A 494-amino-acid polypeptide reads, in one-letter code: Aldehyde dehydrogenase (494 aa).

Residue 223–228 coordinates NAD(+); that stretch reads GSTTAG. Active-site residues include Glu-245 and Cys-279.

The protein belongs to the aldehyde dehydrogenase family.

The catalysed reaction is an aldehyde + NAD(+) + H2O = a carboxylate + NADH + 2 H(+). Its pathway is mycotoxin biosynthesis. Functionally, aldehyde dehydrogenase; part of the gene cluster that mediates the biosynthesis of the selective antifungal agent ascochitine, an o-quinone methide that plays a possible protective role against other microbial competitors in nature and is considered to be important for pathogenicity of legume-associated Didymella species. The pathway probably begins with the synthesis of a keto-aldehyde intermediate by the ascochitine non-reducing polyketide synthase pksAC from successive condensations of 4 malonyl-CoA units, presumably with a simple acetyl-CoA starter unit. Release of the keto-aldehyde intermediate is consistent with the presence of the C-terminal reductive release domain. The HR-PKS (orf7) probably makes a diketide starter unit which is passed to the non-reducing polyketide synthase pksAC for further extension, producing ascochital and ascochitine. The aldehyde dehydrogenase (orf1), the 2-oxoglutarate-dependent dioxygenase (orf3) and the dehydrogenase (orf9) are probably involved in subsequent oxidations of methyl groups to the carboxylic acid of the heterocyclic ring. The ascochitine gene cluster also includes a gene encoding a short peptide with a cupin domain (orf2) that is often found in secondary metabolite gene clusters and which function has still to be determined. This is Aldehyde dehydrogenase from Didymella fabae (Leaf and pod spot disease fungus).